A 453-amino-acid chain; its full sequence is Probable glycine dehydrogenase (decarboxylating) subunit 1 (453 aa).

Belongs to the GcvP family. N-terminal subunit subfamily. As to quaternary structure, the glycine cleavage system is composed of four proteins: P, T, L and H. In this organism, the P 'protein' is a heterodimer of two subunits.

The catalysed reaction is N(6)-[(R)-lipoyl]-L-lysyl-[glycine-cleavage complex H protein] + glycine + H(+) = N(6)-[(R)-S(8)-aminomethyldihydrolipoyl]-L-lysyl-[glycine-cleavage complex H protein] + CO2. The glycine cleavage system catalyzes the degradation of glycine. The P protein binds the alpha-amino group of glycine through its pyridoxal phosphate cofactor; CO(2) is released and the remaining methylamine moiety is then transferred to the lipoamide cofactor of the H protein. In Methylococcus capsulatus (strain ATCC 33009 / NCIMB 11132 / Bath), this protein is Probable glycine dehydrogenase (decarboxylating) subunit 1.